The sequence spans 193 residues: NADH-quinone oxidoreductase subunit B (193 aa).

[4Fe-4S] cluster-binding residues include Cys-72, Cys-73, Cys-137, and Cys-167.

This sequence belongs to the complex I 20 kDa subunit family. As to quaternary structure, NDH-1 is composed of 14 different subunits. Subunits NuoB, C, D, E, F, and G constitute the peripheral sector of the complex. Requires [4Fe-4S] cluster as cofactor.

It is found in the cell inner membrane. It carries out the reaction a quinone + NADH + 5 H(+)(in) = a quinol + NAD(+) + 4 H(+)(out). In terms of biological role, NDH-1 shuttles electrons from NADH, via FMN and iron-sulfur (Fe-S) centers, to quinones in the respiratory chain. The immediate electron acceptor for the enzyme in this species is believed to be ubiquinone. Couples the redox reaction to proton translocation (for every two electrons transferred, four hydrogen ions are translocated across the cytoplasmic membrane), and thus conserves the redox energy in a proton gradient. The polypeptide is NADH-quinone oxidoreductase subunit B (Bartonella quintana (strain Toulouse) (Rochalimaea quintana)).